Consider the following 20-residue polypeptide: Unknown protein NF009 from 2D-PAGE (20 aa).

Positions 1–20 (ATSAAQGAALDESVRKVLKP) are disordered.

In Naegleria fowleri (Brain eating amoeba), this protein is Unknown protein NF009 from 2D-PAGE.